Consider the following 72-residue polypeptide: Translation initiation factor IF-1 (72 aa).

Positions 2–72 (AKDDVIEVDG…TRGRITYRFK (71 aa)) constitute an S1-like domain.

The protein belongs to the IF-1 family. As to quaternary structure, component of the 30S ribosomal translation pre-initiation complex which assembles on the 30S ribosome in the order IF-2 and IF-3, IF-1 and N-formylmethionyl-tRNA(fMet); mRNA recruitment can occur at any time during PIC assembly.

It localises to the cytoplasm. Functionally, one of the essential components for the initiation of protein synthesis. Stabilizes the binding of IF-2 and IF-3 on the 30S subunit to which N-formylmethionyl-tRNA(fMet) subsequently binds. Helps modulate mRNA selection, yielding the 30S pre-initiation complex (PIC). Upon addition of the 50S ribosomal subunit IF-1, IF-2 and IF-3 are released leaving the mature 70S translation initiation complex. The polypeptide is Translation initiation factor IF-1 (Lactococcus lactis subsp. lactis (strain IL1403) (Streptococcus lactis)).